The following is a 177-amino-acid chain: MEALILEPSLYTVKAILILDNDGDRLFAKYYDDTYPSVKEQKAFEKNIFNKTHRTDSEIALLEGLTVVYKSSIDLYFYVIGSSYENELMLMTVLNCLFDSLSQMLRKNVEKRALLENMEGLFLAVDEIVDGGVILESDPQQVVHRVALRGEDVPLTEQTVSQVLQSAKEQIKWSLLR.

Position 1 is an N-acetylmethionine (M1).

This sequence belongs to the adaptor complexes small subunit family. As to quaternary structure, oligomeric complex that consists of at least the alpha, beta, beta', gamma, delta, epsilon and zeta subunits.

It localises to the cytoplasm. It is found in the golgi apparatus membrane. Its subcellular location is the cytoplasmic vesicle. The protein localises to the COPI-coated vesicle membrane. In terms of biological role, the coatomer is a cytosolic protein complex that binds to dilysine motifs and reversibly associates with Golgi non-clathrin-coated vesicles, which further mediate biosynthetic protein transport from the ER, via the Golgi up to the trans Golgi network. Coatomer complex is required for budding from Golgi membranes, and is essential for the retrograde Golgi-to-ER transport of dilysine-tagged proteins. The zeta subunit may be involved in regulating the coat assembly and, hence, the rate of biosynthetic protein transport due to its association-dissociation properties with the coatomer complex. The protein is Coatomer subunit zeta-1 (COPZ1) of Bos taurus (Bovine).